Consider the following 394-residue polypeptide: Phosphopentomutase (394 aa).

6 residues coordinate Mn(2+): Asp-13, Asp-286, His-291, Asp-327, His-328, and His-339.

This sequence belongs to the phosphopentomutase family. Mn(2+) is required as a cofactor.

It localises to the cytoplasm. It catalyses the reaction 2-deoxy-alpha-D-ribose 1-phosphate = 2-deoxy-D-ribose 5-phosphate. It carries out the reaction alpha-D-ribose 1-phosphate = D-ribose 5-phosphate. The protein operates within carbohydrate degradation; 2-deoxy-D-ribose 1-phosphate degradation; D-glyceraldehyde 3-phosphate and acetaldehyde from 2-deoxy-alpha-D-ribose 1-phosphate: step 1/2. Its function is as follows. Isomerase that catalyzes the conversion of deoxy-ribose 1-phosphate (dRib-1-P) and ribose 1-phosphate (Rib-1-P) to deoxy-ribose 5-phosphate (dRib-5-P) and ribose 5-phosphate (Rib-5-P), respectively. This chain is Phosphopentomutase, found in Bacillus cereus (strain G9842).